The following is a 211-amino-acid chain: MIFVTGTDTGIGKTYVSAILGKILKEKGINVGYMKPVESGGIEDTAYVRSELGLNNSFEELNPVNLKKPLSPNISAKIEEKEIDILKIKAAFEKLKEEYEFLIVEGAGGVAVPIKKDFLIADLIKYLDLTCIVVSRPNLGTINHTILTVDFLRKKGITVLGVIINCITDVSKVPYYEETFKSIEEFGNVEIIGIVNDKKDFYIDLKKLNLP.

10–15 (GIGKTY) contributes to the ATP binding site. Residue Thr-14 coordinates Mg(2+). Lys-35 is a catalytic residue. Ser-39 provides a ligand contact to substrate. Residues Asp-44, 105-108 (EGAG), and 165-166 (NC) each bind ATP. Residues Asp-44 and Glu-105 each contribute to the Mg(2+) site.

This sequence belongs to the dethiobiotin synthetase family. In terms of assembly, homodimer. Mg(2+) serves as cofactor.

Its subcellular location is the cytoplasm. The enzyme catalyses (7R,8S)-7,8-diammoniononanoate + CO2 + ATP = (4R,5S)-dethiobiotin + ADP + phosphate + 3 H(+). It participates in cofactor biosynthesis; biotin biosynthesis; biotin from 7,8-diaminononanoate: step 1/2. In terms of biological role, catalyzes a mechanistically unusual reaction, the ATP-dependent insertion of CO2 between the N7 and N8 nitrogen atoms of 7,8-diaminopelargonic acid (DAPA, also called 7,8-diammoniononanoate) to form a ureido ring. The chain is ATP-dependent dethiobiotin synthetase BioD from Methanococcus vannielii (strain ATCC 35089 / DSM 1224 / JCM 13029 / OCM 148 / SB).